The following is a 618-amino-acid chain: DNA mismatch repair protein MutL (618 aa).

This sequence belongs to the DNA mismatch repair MutL/HexB family.

In terms of biological role, this protein is involved in the repair of mismatches in DNA. It is required for dam-dependent methyl-directed DNA mismatch repair. May act as a 'molecular matchmaker', a protein that promotes the formation of a stable complex between two or more DNA-binding proteins in an ATP-dependent manner without itself being part of a final effector complex. The chain is DNA mismatch repair protein MutL from Porphyromonas gingivalis (strain ATCC 33277 / DSM 20709 / CIP 103683 / JCM 12257 / NCTC 11834 / 2561).